Reading from the N-terminus, the 435-residue chain is F-box only protein 9 (435 aa).

The segment at 1-25 (MAEAEEDCHSDAVRVGDEGHESPAE) is disordered. Residues 7–25 (DCHSDAVRVGDEGHESPAE) show a composition bias toward basic and acidic residues. A TPR repeat occupies 82-115 (ARELFLKAVEEEQNGALYEAIKFYRRAMQLVPDI). Ser124 is modified (phosphoserine). An F-box domain is found at 173-224 (QTHISVLPMEVLMYIFRWVVSSDLDLRSLEQLSLVCRGFYICARDPEIWRLA).

As to quaternary structure, part of the SCF (SKP1-CUL1-F-box) E3 ubiquitin-protein ligase complex SCF(FBXO9) composed of CUL1, SKP1, RBX1 and FBXO9. Interacts with TTI1 and TELO2; when TTI1 and TELO2 are phosphorylated by CK2.

Its subcellular location is the cytoplasm. Its pathway is protein modification; protein ubiquitination. Its function is as follows. Substrate recognition component of a SCF (SKP1-CUL1-F-box protein) E3 ubiquitin-protein ligase complex which mediates the ubiquitination and subsequent proteasomal degradation of target proteins and plays a role in several biological processes such as cell cycle, cell proliferation, or maintenance of chromosome stability. Ubiquitinates mTORC1-bound TTI1 and TELO2 when they are phosphorylated by CK2 following growth factor deprivation, leading to their degradation. In contrast, does not mediate ubiquitination of TTI1 and TELO2 when they are part of the mTORC2 complex. As a consequence, mTORC1 is inactivated to restrain cell growth and protein translation, while mTORC2 is the activated due to the relief of feedback inhibition by mTORC1. Plays a role in maintaining epithelial cell survival by regulating the turn-over of chromatin modulator PRMT4 through ubiquitination and degradation by the proteasomal pathway. Also regulates PPARgamma stability by facilitating PPARgamma/PPARG ubiquitination and thereby plays a role in adipocyte differentiation. In Rattus norvegicus (Rat), this protein is F-box only protein 9 (Fbxo9).